A 282-amino-acid polypeptide reads, in one-letter code: Heat stress transcription factor A-6a (282 aa).

A DNA-binding region spans residues 17-111; it reads PTAFLTKTYN…LLKNIKRRKT (95 aa). The segment at 111 to 177 is hydrophobic repeat HR-A/B; it reads TSSQTQTQSL…MMMNFLLKKI (67 aa). The Bipartite nuclear localization signal motif lies at 175–190; sequence KKIKKPSFLQSLRKRN. The short motif at 261–270 is the AHA element; it reads EGIWKGFVLS.

Belongs to the HSF family. Class A subfamily. Homotrimer. Exhibits temperature-dependent phosphorylation.

It localises to the nucleus. Its function is as follows. Transcriptional activator that specifically binds DNA sequence 5'-AGAAnnTTCT-3' known as heat shock promoter elements (HSE). The chain is Heat stress transcription factor A-6a (HSFA6A) from Arabidopsis thaliana (Mouse-ear cress).